The chain runs to 223 residues: Riboflavin kinase (223 aa).

Residues 1–89 (MHRINALKHL…KHIFCGDEDK (89 aa)) are unknown. Residues 90 to 223 (VELYGNVITG…IMIEDRSACE (134 aa)) form a riboflavin kinase region. 99–104 (GLGEGQ) is a CDP binding site. Residues threonine 128 and asparagine 130 each coordinate Mg(2+). Residues serine 185 and glutamate 193 each coordinate FMN. CDP is bound at residue 198-201 (VHLR).

The protein belongs to the archaeal riboflavin kinase family. It depends on Mg(2+) as a cofactor.

It catalyses the reaction riboflavin + CTP = CDP + FMN + H(+). The protein operates within cofactor biosynthesis; FMN biosynthesis; FMN from riboflavin (CTP route): step 1/1. Functionally, catalyzes the CTP-dependent phosphorylation of riboflavin (vitamin B2) to form flavin mononucleotide (FMN). This is Riboflavin kinase (ribK) from Methanococcoides burtonii (strain DSM 6242 / NBRC 107633 / OCM 468 / ACE-M).